Here is a 465-residue protein sequence, read N- to C-terminus: UDP-N-acetylmuramate--L-alanine ligase (465 aa).

114 to 120 provides a ligand contact to ATP; sequence GTHGKTT.

Belongs to the MurCDEF family.

The protein resides in the cytoplasm. The enzyme catalyses UDP-N-acetyl-alpha-D-muramate + L-alanine + ATP = UDP-N-acetyl-alpha-D-muramoyl-L-alanine + ADP + phosphate + H(+). The protein operates within cell wall biogenesis; peptidoglycan biosynthesis. Functionally, cell wall formation. The chain is UDP-N-acetylmuramate--L-alanine ligase from Chlorobium phaeobacteroides (strain BS1).